Here is a 254-residue protein sequence, read N- to C-terminus: 3-deoxy-manno-octulosonate cytidylyltransferase (254 aa).

The protein belongs to the KdsB family.

Its subcellular location is the cytoplasm. The catalysed reaction is 3-deoxy-alpha-D-manno-oct-2-ulosonate + CTP = CMP-3-deoxy-beta-D-manno-octulosonate + diphosphate. It participates in nucleotide-sugar biosynthesis; CMP-3-deoxy-D-manno-octulosonate biosynthesis; CMP-3-deoxy-D-manno-octulosonate from 3-deoxy-D-manno-octulosonate and CTP: step 1/1. Its pathway is bacterial outer membrane biogenesis; lipopolysaccharide biosynthesis. In terms of biological role, activates KDO (a required 8-carbon sugar) for incorporation into bacterial lipopolysaccharide in Gram-negative bacteria. The sequence is that of 3-deoxy-manno-octulosonate cytidylyltransferase from Bordetella pertussis (strain Tohama I / ATCC BAA-589 / NCTC 13251).